Consider the following 372-residue polypeptide: DNA double-strand break repair protein Mre11 (372 aa).

Mn(2+)-binding residues include aspartate 8, histidine 10, aspartate 49, and asparagine 84. Histidine 85 (proton donor) is an active-site residue. Mn(2+) is bound by residues histidine 161, histidine 190, and histidine 192.

This sequence belongs to the MRE11/RAD32 family. In terms of assembly, homodimer. Forms a heterotetramer composed of two Mre11 subunits and two Rad50 subunits. Mn(2+) serves as cofactor.

Nuclease activity is regulated by Rad50. In terms of biological role, part of the Rad50/Mre11 complex, which is involved in the early steps of DNA double-strand break (DSB) repair. The complex may facilitate opening of the processed DNA ends to aid in the recruitment of HerA and NurA. Mre11 binds to DSB ends and has both double-stranded 3'-5' exonuclease activity and single-stranded endonuclease activity. The protein is DNA double-strand break repair protein Mre11 of Methanococcus maripaludis (strain DSM 14266 / JCM 13030 / NBRC 101832 / S2 / LL).